Consider the following 89-residue polypeptide: Protein S100-A8 (89 aa).

2 consecutive EF-hand domains span residues 12–47 and 46–81; these read LIDV…KFMK and MKKK…VGLE. Zn(2+) is bound by residues histidine 17 and histidine 27. Aspartate 33 lines the Ca(2+) pocket. Residue cysteine 42 is modified to S-nitrosocysteine. Residues aspartate 59, asparagine 61, aspartate 63, and glutamate 70 each contribute to the Ca(2+) site. Residue histidine 83 coordinates Zn(2+).

Belongs to the S-100 family. In terms of assembly, homodimer. Preferentially exists as a heterodimer or heterotetramer with S100A9 known as calprotectin (S100A8/A9). S100A8 interacts with AGER, ATP2A2 and with the heterodimeric complex formed by TLR4 and LY96. Calprotectin (S100A8/9) interacts with CEACAM3 and tubulin filaments in a calcium-dependent manner. Heterotetrameric calprotectin (S100A8/A9) interacts with ANXA6 and associates with tubulin filaments in activated monocytes. S100A8 and calprotectin (S100A8/9) interact with NCF2/P67PHOX, RAC1 and RAC2. Calprotectin (S100A8/9) interacts with CYBA and CYBB. Calprotectin (S100A8/9) interacts with NOS2 to form the iNOS-S100A8/A9 transnitrosylase complex. Calprotectin (S100A8/9) interacts with CD69. As to expression, found essentially in phagocytic cells.

It localises to the secreted. The protein localises to the cytoplasm. The protein resides in the cytoskeleton. It is found in the cell membrane. In terms of biological role, S100A8 is a calcium- and zinc-binding protein which plays a prominent role in the regulation of inflammatory processes and immune response. It can induce neutrophil chemotaxis and adhesion. Predominantly found as calprotectin (S100A8/A9) which has a wide plethora of intra- and extracellular functions. The intracellular functions include: facilitating leukocyte arachidonic acid trafficking and metabolism, modulation of the tubulin-dependent cytoskeleton during migration of phagocytes and activation of the neutrophilic NADPH-oxidase. Also participates in regulatory T-cell differentiation together with CD69. Activates NADPH-oxidase by facilitating the enzyme complex assembly at the cell membrane, transferring arachidonic acid, an essential cofactor, to the enzyme complex and S100A8 contributes to the enzyme assembly by directly binding to NCF2/P67PHOX. The extracellular functions involve pro-inflammatory, antimicrobial, oxidant-scavenging and apoptosis-inducing activities. Its pro-inflammatory activity includes recruitment of leukocytes, promotion of cytokine and chemokine production, and regulation of leukocyte adhesion and migration. Acts as an alarmin or a danger associated molecular pattern (DAMP) molecule and stimulates innate immune cells via binding to pattern recognition receptors such as Toll-like receptor 4 (TLR4) and receptor for advanced glycation endproducts (AGER). Binding to TLR4 and AGER activates the MAP-kinase and NF-kappa-B signaling pathways resulting in the amplification of the pro-inflammatory cascade. Has antimicrobial activity towards bacteria and fungi and exerts its antimicrobial activity probably via chelation of Zn(2+) which is essential for microbial growth. Can induce cell death via autophagy and apoptosis and this occurs through the cross-talk of mitochondria and lysosomes via reactive oxygen species (ROS) and the process involves BNIP3. Can regulate neutrophil number and apoptosis by an anti-apoptotic effect; regulates cell survival via ITGAM/ITGB and TLR4 and a signaling mechanism involving MEK-ERK. Its role as an oxidant scavenger has a protective role in preventing exaggerated tissue damage by scavenging oxidants. The iNOS-S100A8/A9 transnitrosylase complex is proposed to direct selective inflammatory stimulus-dependent S-nitrosylation of multiple targets such as GAPDH, ANXA5, EZR, MSN and VIM by recognizing a [IL]-x-C-x-x-[DE] motif; S100A8 seems to contribute to S-nitrosylation site selectivity. This Bos taurus (Bovine) protein is Protein S100-A8 (S100A8).